The primary structure comprises 1221 residues: Fibulin-2 (1221 aa).

A signal peptide spans 1–26 (MLLQESAGVWLALALVTALTPSPSMA). A subdomain NA (Cys-rich) region spans residues 27-176 (VPWQDCTGAE…ELICYQLPGC (150 aa)). Residues 27–434 (VPWQDCTGAE…DGSTKDLIET (408 aa)) form a n region. Positions 177 to 434 (HGNFSDAEEG…DGSTKDLIET (258 aa)) are subdomain NB (Cys-free). A glycan (N-linked (GlcNAc...) asparagine) is linked at Asn-179. 2 disordered regions span residues 248–329 (PTAA…LIPD) and 341–399 (GAAP…PQHP). Acidic residues predominate over residues 270–283 (DTEEDEEEEEEETL). Basic and acidic residues predominate over residues 312–322 (QEKEAEAKAGP). The short motif at 421 to 423 (RGD) is the Cell attachment site element. Disulfide bonds link Cys-435–Cys-462, Cys-436–Cys-469, Cys-449–Cys-470, Cys-479–Cys-508, Cys-492–Cys-509, Cys-511–Cys-535, Cys-512–Cys-542, Cys-525–Cys-543, Cys-598–Cys-610, Cys-606–Cys-619, and Cys-621–Cys-634. 3 consecutive Anaphylatoxin-like domains span residues 435–477 (CCAA…LKEK), 478–510 (SCVA…QCCD), and 511–543 (CCGL…LSCC). N-linked (GlcNAc...) asparagine glycosylation is present at Asn-497. The EGF-like 1; calcium-binding domain maps to 594–635 (DQDECLMLPGELCQHLCINTVGSYRCACFPGFELQGDGRTCR). Positions 633-661 (TCRPDRGAPQLDTARESAPRSESAQVSPN) are disordered. Polar residues predominate over residues 652 to 661 (RSESAQVSPN). Residues 669 to 708 (QPNTCKDNGPCRQVCRVVGDTAMCSCFPGYAIMADGVSCE) form the EGF-like 2 domain. 5 disulfide bridges follow: Cys-673–Cys-683, Cys-679–Cys-692, Cys-694–Cys-707, Cys-713–Cys-726, and Cys-720–Cys-735. Positions 709–755 (DQDECLMGTHDCSWKQFCVNTLGSFYCVNHTVLCAEGYILNAHRKCV) constitute an EGF-like 3; calcium-binding domain. An N-linked (GlcNAc...) asparagine glycan is attached at Asn-737. A disulfide bond links Cys-742 and Cys-754. The region spanning 756 to 800 (DINECVTDLHTCTRAEHCVNTPGSFQCYKALTCEPGYVLTDGECT) is the EGF-like 4; calcium-binding domain. The EGF-like 5; calcium-binding domain occupies 801–846 (DVDECVTGTHNCQAGFSCQNTKGSFYCQARQRCMDGFLQDPEGNCV). 3 disulfide bridges follow: Cys-805–Cys-818, Cys-812–Cys-827, and Cys-833–Cys-845. Positions 847 to 894 (DINECTSLLEPCRSGFSCINTVGSYTCQRNPLVCGRGYHANEEGSECV) constitute an EGF-like 6; calcium-binding domain. Residues 895–937 (DVNECETGVHRCGEGQLCYNLPGSYRCDCKPGFQRDAFGRTCI) enclose the EGF-like 7; calcium-binding domain. 15 cysteine pairs are disulfide-bonded: Cys-899/Cys-912, Cys-906/Cys-921, Cys-923/Cys-936, Cys-942/Cys-954, Cys-950/Cys-963, Cys-965/Cys-978, Cys-984/Cys-993, Cys-989/Cys-1002, Cys-1004/Cys-1017, Cys-1023/Cys-1035, Cys-1031/Cys-1044, Cys-1046/Cys-1060, Cys-1066/Cys-1079, Cys-1073/Cys-1088, and Cys-1093/Cys-1105. One can recognise an EGF-like 8; calcium-binding domain in the interval 938-979 (DVNECWVSPGRLCQHTCENTPGSYRCSCAAGFLLAADGKHCE). The EGF-like 9; calcium-binding domain maps to 980-1018 (DVNECETRRCSQECANIYGSYQCYCRQGYQLAEDGHTCT). The EGF-like 10; calcium-binding domain occupies 1019–1061 (DIDECAQGAGILCTFRCVNVPGSYQCACPEQGYTMMANGRSCK). In terms of domain architecture, EGF-like 11; calcium-binding spans 1062–1106 (DLDECALGTHNCSEAETCHNIQGSFRCLRFDCPPNYVRVSETKCE). A glycan (N-linked (GlcNAc...) asparagine) is linked at Asn-1072. Positions 1111 to 1221 (QDITECQTSP…MYIFFTTFAP (111 aa)) are domain III.

Belongs to the fibulin family. As to quaternary structure, homotrimer; disulfide-linked. Interacts with LAMA2. Interacts with FBN1 (via N-terminal domain). Forms a ternary complex with ELN and FBN1. Component of both basement membranes and other connective tissues.

Its subcellular location is the secreted. It localises to the extracellular space. The protein localises to the extracellular matrix. Its binding to fibronectin and some other ligands is calcium dependent. May act as an adapter that mediates the interaction between FBN1 and ELN. In Mus musculus (Mouse), this protein is Fibulin-2 (Fbln2).